The chain runs to 695 residues: Nicastrin (695 aa).

A signal peptide spans 1 to 22 (MEMRLNAASIWLLILSYGATIA). At 23-654 (QGERTRDKMY…IFLRPSNVHQ (632 aa)) the chain is on the extracellular side. 9 N-linked (GlcNAc...) asparagine glycosylation sites follow: asparagine 45, asparagine 108, asparagine 116, asparagine 138, asparagine 381, asparagine 461, asparagine 489, asparagine 585, and asparagine 609. A helical membrane pass occupies residues 655–675 (VTTLSVGIVVLIISFCLVYII). The Cytoplasmic segment spans residues 676-695 (SSRSEVLFEDLPASNAALFG).

It belongs to the nicastrin family. In terms of assembly, component of the gamma-secretase complex, a complex composed of a presenilin (Psn) homodimer, nicastrin (Nct), Aph-1 and Pen-2.

It localises to the membrane. Its function is as follows. Essential subunit of the gamma-secretase complex, an endoprotease complex that catalyzes the intramembrane cleavage of integral membrane proteins such as Notch. It probably represents a stabilizing cofactor required for the assembly of the gamma-secretase complex. The sequence is that of Nicastrin from Drosophila melanogaster (Fruit fly).